A 430-amino-acid chain; its full sequence is Probable ribosomal RNA small subunit methyltransferase B (430 aa).

S-adenosyl-L-methionine contacts are provided by residues 246 to 252 (CAAPGSK), D270, D299, and D318. Residue C371 is the Nucleophile of the active site.

It belongs to the class I-like SAM-binding methyltransferase superfamily. RsmB/NOP family.

Its subcellular location is the cytoplasm. It carries out the reaction cytidine(967) in 16S rRNA + S-adenosyl-L-methionine = 5-methylcytidine(967) in 16S rRNA + S-adenosyl-L-homocysteine + H(+). Specifically methylates the cytosine at position 967 (m5C967) of 16S rRNA. In Coxiella burnetii (strain RSA 493 / Nine Mile phase I), this protein is Probable ribosomal RNA small subunit methyltransferase B.